The chain runs to 314 residues: Testis-specific Y-encoded protein 9 (314 aa).

It belongs to the nucleosome assembly protein (NAP) family.

It localises to the cytoplasm. It is found in the nucleus. In terms of biological role, may be involved in sperm differentiation and proliferation. This is Testis-specific Y-encoded protein 9 from Homo sapiens (Human).